We begin with the raw amino-acid sequence, 270 residues long: Putative phosphoenolpyruvate synthase regulatory protein (270 aa).

150–157 (GVSRCGKT) provides a ligand contact to ADP.

This sequence belongs to the pyruvate, phosphate/water dikinase regulatory protein family. PSRP subfamily.

It carries out the reaction [pyruvate, water dikinase] + ADP = [pyruvate, water dikinase]-phosphate + AMP + H(+). The catalysed reaction is [pyruvate, water dikinase]-phosphate + phosphate + H(+) = [pyruvate, water dikinase] + diphosphate. Its function is as follows. Bifunctional serine/threonine kinase and phosphorylase involved in the regulation of the phosphoenolpyruvate synthase (PEPS) by catalyzing its phosphorylation/dephosphorylation. This Shewanella sp. (strain ANA-3) protein is Putative phosphoenolpyruvate synthase regulatory protein.